We begin with the raw amino-acid sequence, 165 residues long: Neurotrophin-3 (165 aa).

A signal peptide spans 1–3 (IQS). The propeptide occupies 4–119 (TSMDQGSLSE…VLNQTSRRKR (116 aa)). N112 carries N-linked (GlcNAc...) asparagine glycosylation.

This sequence belongs to the NGF-beta family.

It is found in the secreted. Seems to promote the survival of visceral and proprioceptive sensory neurons. This is Neurotrophin-3 (NTF3) from Morelia spilota (Carpet python).